A 471-amino-acid polypeptide reads, in one-letter code: 5-hydroxytryptamine receptor 2A (471 aa).

At 1–80 (MEILCEDNIS…LQEKNWSALL (80 aa)) the chain is on the extracellular side. Asparagine 8, asparagine 38, asparagine 44, asparagine 51, and asparagine 54 each carry an N-linked (GlcNAc...) asparagine glycan. Residues 81-97 (TTVVIILTIAGNILVIM) form a helical membrane-spanning segment. Residues 98–111 (AVSLEKKLQNATNY) lie on the Cytoplasmic side of the membrane. The chain crosses the membrane as a helical span at residues 112–137 (FLMSLAIADMLLGFLVMPVSMLTILY). Over 138–146 (GYRWPLPSK) the chain is Extracellular. The chain crosses the membrane as a helical span at residues 147–171 (LCAVWIYLDVLFSTASIMHLCAISL). Cysteine 148 and cysteine 227 are disulfide-bonded. Aspartate 155 contacts serotonin. Positions 172–174 (DRY) match the DRY motif; important for ligand-induced conformation changes motif. Topologically, residues 172–191 (DRYVAIQNPIHHSRFNSRTK) are cytoplasmic. A helical transmembrane segment spans residues 192 to 215 (AFLKIIAVWTISVGISMPIPVFGL). The Extracellular segment spans residues 216–232 (QDDSKVFKEGSCLLADD). Residues 233-258 (NFVLIGSFVAFFIPLTIMVITYFLTI) traverse the membrane as a helical segment. Topologically, residues 259 to 322 (KSLQKEATLC…QSISNEQKAC (64 aa)) are cytoplasmic. Residue serine 280 is modified to Phosphoserine. Residues 323-348 (KVLGIVFFLFVVMWCPFFITNIMAVI) traverse the membrane as a helical segment. Asparagine 343 contacts serotonin. A disulfide bridge connects residues cysteine 349 and cysteine 353. The Extracellular portion of the chain corresponds to 349–356 (CKESCNEN). A helical membrane pass occupies residues 357-382 (VIGALLNVFVWIGYLSSAVNPLVYTL). The NPxxY motif; important for ligand-induced conformation changes and signaling motif lies at 376–380 (NPLVY). Topologically, residues 383–471 (FNKTYRSAFS…ETVNEKVSCV (89 aa)) are cytoplasmic. Residues 469-471 (SCV) carry the PDZ-binding motif.

The protein belongs to the G-protein coupled receptor 1 family. In terms of assembly, interacts (via C-terminus) with MPDZ and PATJ. May interact (via C-terminus) with MPP3, PRDX6, DLG4, DLG1, CASK, APBA1 and MAGI2. Interacts with GRM2 and DRD2; this may affect signaling. As to expression, detected in neurons in brain cortex. Detected in adult intestine, especially in mucosal epithelium, longitudinal and circular layers of muscularis externa and myenteric plexuses. Highly expressed in Paneth cells, and detected at lower levels in enterocytes (at protein level). Detected in neurons in the brain cortex.

It is found in the cell membrane. Its subcellular location is the cell projection. It localises to the dendrite. The protein localises to the axon. The protein resides in the cytoplasmic vesicle. It is found in the membrane. Its subcellular location is the caveola. It localises to the presynapse. With respect to regulation, G-protein coupled receptor activity is regulated by lipids: oleamide increases HTR2A-mediated activity. G-protein coupled receptor for 5-hydroxytryptamine (serotonin). Also functions as a receptor for various drugs and psychoactive substances, including mescaline, psilocybin, 1-(2,5-dimethoxy-4-iodophenyl)-2-aminopropane (DOI) and lysergic acid diethylamide (LSD). Ligand binding causes a conformation change that triggers signaling via guanine nucleotide-binding proteins (G proteins) and modulates the activity of downstream effectors. HTR2A is coupled to G(q)/G(11) G alpha proteins and activates phospholipase C-beta, releasing diacylglycerol (DAG) and inositol 1,4,5-trisphosphate (IP3) second messengers that modulate the activity of phosphatidylinositol 3-kinase and promote the release of Ca(2+) ions from intracellular stores, respectively. Beta-arrestin family members inhibit signaling via G proteins and mediate activation of alternative signaling pathways. Affects neural activity, perception, cognition and mood. Plays a role in the regulation of behavior, including responses to anxiogenic situations and psychoactive substances. Plays a role in intestinal smooth muscle contraction, and may play a role in arterial vasoconstriction. The chain is 5-hydroxytryptamine receptor 2A (Htr2a) from Mus musculus (Mouse).